Reading from the N-terminus, the 430-residue chain is Trigger factor (430 aa).

Residues 163 to 248 (GNIAIIDFKG…IKDIKVKELP (86 aa)) form the PPIase FKBP-type domain.

The protein belongs to the FKBP-type PPIase family. Tig subfamily.

The protein resides in the cytoplasm. It catalyses the reaction [protein]-peptidylproline (omega=180) = [protein]-peptidylproline (omega=0). In terms of biological role, involved in protein export. Acts as a chaperone by maintaining the newly synthesized protein in an open conformation. Functions as a peptidyl-prolyl cis-trans isomerase. This Clostridium botulinum (strain Kyoto / Type A2) protein is Trigger factor.